Here is a 32-residue protein sequence, read N- to C-terminus: CSGLSTCALMKLSQDLHRFNSYPRTNVGAGTP.

An intrachain disulfide couples Cys-1 to Cys-7. Pro-32 bears the Proline amide mark.

This sequence belongs to the calcitonin family.

Its subcellular location is the secreted. Functionally, causes a rapid but short-lived drop in the level of calcium and phosphate in blood by promoting the incorporation of those ions in the bones. This is Calcitonin from Aquarana catesbeiana (American bullfrog).